Reading from the N-terminus, the 272-residue chain is Short-chain dehydrogenase srdC (272 aa).

Residues Ile-15, Asp-65, Arg-127, Tyr-173, Lys-177, Val-206, and Thr-208 each contribute to the NADP(+) site. The active-site Proton donor is the Tyr-173. The Lowers pKa of active site Tyr role is filled by Lys-177.

It belongs to the short-chain dehydrogenases/reductases (SDR) family.

Functionally, short-chain dehydrogenase; part of the gene cluster that mediates the biosynthesis of sordarial, a salicylic aldehyde structurally related to the phytotoxin pyriculol. The most interesting aspect of this pathway is formation of an aromatic product from the highly reducing polyketide synthase srdA. SrdA synthesizes a reduced polyketide chain from one molecule of acetyl-CoA and five molecules of malonyl-CoA. The polyketide chain is then reductively released as an aldehyde. The oxidoreductases srdC, srdD and srdE then oxidize one of the hydroxy groups to facilitate the intramolecular aldol condensation, followed by dehydration to yield a salicylic aldehyde. This aldehyde can undergo facile reduction by endogenous reductases to yield the alcohol 1-hydroxy-2-hydroxymethyl-3-pent-1,3-dienylbenzene. The flavin-dependent srdI counteract against the propensity of the aldehydes to be reduced under physiological conditions and is responsible for reoxidizing 1-hydroxy-2-hydroxymethyl-3-pent-1,3-dienylbenzene back to the salicylic aldehyde. This salicylic aldehyde is then selectively epoxidized by the cupin-domain-containing oxidoreductase srdB to yield the epoxide, which can be hydrolyzed stereoselectively by the hydrolase srdG to give the final product sordarial. The polypeptide is Short-chain dehydrogenase srdC (Neurospora crassa (strain ATCC 24698 / 74-OR23-1A / CBS 708.71 / DSM 1257 / FGSC 987)).